A 348-amino-acid polypeptide reads, in one-letter code: Lysophosphatidic acid receptor 2 (348 aa).

The Extracellular portion of the chain corresponds to 1–30 (MGQCYYNETIGFFYNNSGKELSLHWRPKDV). Residues Asn-7 and Asn-15 are each glycosylated (N-linked (GlcNAc...) asparagine). Residues 31-51 (VVVALGLTVSVLVLLTNLLVI) form a helical membrane-spanning segment. Topologically, residues 52–66 (AAIASNRRFHQPIYY) are cytoplasmic. A helical transmembrane segment spans residues 67–87 (LLGNLAAADLFAGMAYLFLMF). The Extracellular portion of the chain corresponds to 88-104 (HTGPRTARLSIKGWFLR). Residues 105–124 (QGLLDTSLTASVATLLAIAV) traverse the membrane as a helical segment. Over 125–144 (ERHRSVMAVQLHSRLPRGRV) the chain is Cytoplasmic. A helical membrane pass occupies residues 145-165 (VTLIVGVWAAALGLGLLPAHF). Over 166–185 (WHCLCDLDSCSRMVPLFSRS) the chain is Extracellular. Residues 186 to 206 (YLAAWALSSLLVFLLMVAVYT) form a helical membrane-spanning segment. Residues 207–239 (RIFFYVRRRVERMAEHVSCHPRYRETTLSLVKT) lie on the Cytoplasmic side of the membrane. The chain crosses the membrane as a helical span at residues 240–260 (VVIILGAFVVCWTPGQVVLLL). Over 261 to 270 (DGLDCKSCNV) the chain is Extracellular. A helical transmembrane segment spans residues 271-291 (LAVEKYFLLLAEANSLVNAVV). The Cytoplasmic segment spans residues 292–348 (YSCRDAEMRRTFRRLLCCMCLRWSSHKSARYSASAQTGASTRIMLPENGRPLMDSTL). Residue Cys-308 is the site of S-palmitoyl cysteine attachment. A PDZ-binding motif is present at residues 345-348 (DSTL).

It belongs to the G-protein coupled receptor 1 family. In terms of assembly, interacts with SLC9A3R2/NHERF2, MAGI3 and PLCB3. Interacts with RALA and GRK2. As to expression, most abundantly expressed in testes, kidney, and embryonic brain. Other organs also express the transcript, including heart, lung, spleen, thymus, stomach, and adult brain. Several have little or no expression, including liver, small intestine, and skeletal muscle.

Its subcellular location is the cell surface. It localises to the cell membrane. Functionally, receptor for lysophosphatidic acid (LPA), a mediator of diverse cellular activities. Seems to be coupled to the G(i)/G(o), G(12)/G(13), and G(q) families of heteromeric G proteins. Plays a key role in phospholipase C-beta (PLC-beta) signaling pathway Stimulates phospholipase C (PLC) activity in a manner that is independent of RALA activation. In Mus musculus (Mouse), this protein is Lysophosphatidic acid receptor 2.